We begin with the raw amino-acid sequence, 128 residues long: Large ribosomal subunit protein bL17 (128 aa).

The protein belongs to the bacterial ribosomal protein bL17 family. In terms of assembly, part of the 50S ribosomal subunit. Contacts protein L32.

The sequence is that of Large ribosomal subunit protein bL17 from Streptococcus agalactiae serotype Ia (strain ATCC 27591 / A909 / CDC SS700).